A 182-amino-acid chain; its full sequence is HGPRTase-like protein 1 (182 aa).

The protein belongs to the purine/pyrimidine phosphoribosyltransferase family. Archaeal HPRT subfamily.

May catalyze a purine salvage reaction, the substrate is unknown. This is HGPRTase-like protein 1 from Haloarcula marismortui (strain ATCC 43049 / DSM 3752 / JCM 8966 / VKM B-1809) (Halobacterium marismortui).